Reading from the N-terminus, the 289-residue chain is L-alanyl-D-glutamate peptidase (289 aa).

This sequence belongs to the peptidase M15C family.

Its subcellular location is the secreted. In terms of biological role, cell wall lytic enzyme. Hydrolyzes the link between L-alanine and D-glutamate residues in certain bacterial cell-wall glycopeptides. This chain is L-alanyl-D-glutamate peptidase (ply), found in Listeria monocytogenes (Bacteriophage A500).